Consider the following 549-residue polypeptide: Protein wntless homolog (549 aa).

A signal peptide spans 1-34 (MAGGAVIENLSNRKLFVIFAGLLVIQIMFFLIGA). Over 36-236 (YAPSPSSYME…RLIEIHQNGG (201 aa)) the chain is Lumenal. Residues 237–257 (FTLVWLWTKTFMTPVVAICLW) traverse the membrane as a helical segment. The Cytoplasmic portion of the chain corresponds to 258-275 (WYYNRINQLARNPLLLER). A helical membrane pass occupies residues 276-296 (AILLLGLSLVILDFPIEWISL). Topologically, residues 297-310 (TYRIPFLLLISDLR) are lumenal. Residues 311-331 (QGLFYTVLFSFWLIFAGEHLI) form a helical membrane-spanning segment. At 332–345 (DDNTRNNLKSYRFN) the chain is on the cytoplasmic side. The helical transmembrane segment at 346–366 (LSFIITASLGLLIYDLIERGI) threads the bilayer. The Lumenal portion of the chain corresponds to 367–383 (QLYDPFYSVWSSPTGSQ). Residues 384-404 (IAYFAIFISAISTVAYFIFLF) form a helical membrane-spanning segment. Over 405 to 439 (FKIARVWSTIKSKRSAQIYQTSENRRLKVEGVIYR) the chain is Cytoplasmic. Residues 440–460 (FKFLMLFTLLCSAFTIAAYFM) traverse the membrane as a helical segment. Over 461–483 (KQYGEAQLHGDEARDGFLTGSTS) the chain is Lumenal. The helical transmembrane segment at 484-504 (AFFTGAFGMCNIYVLLLLAMY) threads the bilayer. Topologically, residues 505–549 (APSHKHYRGASQLIDENDDDEIMEDPSNQHTESNAMTTFLKPSTD) are cytoplasmic. A disordered region spans residues 524 to 549 (DEIMEDPSNQHTESNAMTTFLKPSTD). The segment covering 530–549 (PSNQHTESNAMTTFLKPSTD) has biased composition (polar residues).

This sequence belongs to the wntless family. As to expression, expressed in the tail hypodermis, stomatointestinal muscle, the mesoblast cell M and its descendants, CAN neurons, the developing vulva, the pharynx and the pharyngeal intestinal valve.

The protein localises to the cell membrane. It is found in the early endosome membrane. Its subcellular location is the golgi apparatus membrane. The protein resides in the basal cell membrane. It localises to the late endosome membrane. In terms of biological role, probable sorting receptor which regulates endocytosis and secretion of the wnt ligand egl-20. Recycling of mig-14 from the plasma membrane to the Golgi apparatus by the retromer complex is essential for its function. Its endosomal trafficking is regulated by its association with sorting nexin snx-3 on early endosomes and the mtm-6/mtm-9 myotubularin complex. Required in embryonic development for endoderm specification and the correct positioning and orientation of the mitotic spindles and division planes in blastomere cells. Functions during vulval development, playing a role in vulval precursor cell fate specification. During development, specifically regulates the migration of HSN neurons, the left Q neuroblast (QL) and its descendants and the distal tip cells of the gonads. Positioning of Q neuroblasts may be both dependent and independent of hox gene mab-5. Involved in establishing ALM and PLM neuronal cell polarity. The chain is Protein wntless homolog from Caenorhabditis elegans.